Here is a 134-residue protein sequence, read N- to C-terminus: Profilin-2 (134 aa).

An intrachain disulfide couples cysteine 13 to cysteine 118. The Involved in PIP2 interaction motif lies at 84 to 100; the sequence is AVIRGKKGSGGITIKKT. Phosphothreonine is present on threonine 114.

It belongs to the profilin family. Occurs in many kinds of cells as a complex with monomeric actin in a 1:1 ratio. Phosphorylated by MAP kinases.

It localises to the cytoplasm. The protein resides in the cytoskeleton. Functionally, binds to actin and affects the structure of the cytoskeleton. At high concentrations, profilin prevents the polymerization of actin, whereas it enhances it at low concentrations. This chain is Profilin-2, found in Olea europaea (Common olive).